The following is a 142-amino-acid chain: Baculoviral IAP repeat-containing protein 5 (142 aa).

The stretch at 18-88 (RISTFKNWPF…KHSSGCAFLS (71 aa)) is one BIR repeat. The residue at position 20 (S20) is a Phosphoserine; by AURKC. K23 bears the N6-acetyllysine mark. Phosphothreonine; by CDK1 and CDK15 is present on T34. At T48 the chain carries Phosphothreonine. Residues C57, C60, H77, and C84 each contribute to the Zn(2+) site. 4 positions are modified to N6-acetyllysine: K90, K110, K112, and K115. The residue at position 117 (T117) is a Phosphothreonine; by AURKB. K129 bears the N6-acetyllysine mark.

The protein belongs to the IAP family. As to quaternary structure, monomer or homodimer. Exists as a homodimer in the apo state and as a monomer in the CPC-bound state. The monomer protects cells against apoptosis more efficiently than the dimer. Only the dimeric form is capable of enhancing tubulin stability in cells. When phosphorylated, interacts with LAMTOR5/HBXIP; the resulting complex binds pro-CASP9, as well as active CASP9, but much less efficiently. Component of the chromosomal passenger complex (CPC) composed of at least BIRC5/survivin, CDCA8/borealin, INCENP, AURKB or AURKC; in the complex forms a triple-helix bundle-based subcomplex with INCENP and CDCA8. Interacts with JTB. Interacts (via BIR domain) with histone H3 phosphorylated at 'Thr-3' (H3pT3). Interacts with EVI5. Interacts with GTP-bound RAN in both the S and M phases of the cell cycle. Interacts with USP9X. Interacts with tubulin. Interacts with BIRC2/c-IAP1. The acetylated form at Lys-129 interacts with STAT3. The monomeric form deacetylated at Lys-129 interacts with XPO1/CRM1. The monomeric form interacts with XIAP/BIRC4. Both the dimeric and monomeric form can interact with DIABLO/SMAC. Interacts with BIRC6/bruce. Interacts with FBXL7; this interaction facilitates the polyubiquitination and subsequent proteasomal degradation of BIRC5 by the SCF(FBXL7) E3 ubiquitin-protein ligase complex. In terms of processing, ubiquitinated by the Cul9-RING ubiquitin-protein ligase complex, leading to its degradation. Ubiquitination is required for centrosomal targeting. Deubiquitinated by USP35 or USP38; leading to stabilization. Acetylation at Lys-129 results in its homodimerization, while deacetylation promotes the formation of monomers which heterodimerize with XPO1/CRM1 which facilitates its nuclear export. The acetylated form represses STAT3 transactivation. The dynamic equilibrium between its acetylation and deacetylation at Lys-129 determines its interaction with XPO1/CRM1, its subsequent subcellular localization, and its ability to inhibit STAT3 transactivation. Post-translationally, in vitro phosphorylation at Thr-117 by AURKB prevents interaction with INCENP and localization to mitotic chromosomes. Phosphorylation at Thr-48 by CK2 is critical for its mitotic and anti-apoptotic activities. Phosphorylation at Thr-34 by CDK15 is critical for its anti-apoptotic activity. Phosphorylation at Ser-20 by AURKC is critical for regulation of proper chromosome alignment and segregation, and possibly cytokinesis.

The protein resides in the cytoplasm. It is found in the nucleus. It localises to the chromosome. Its subcellular location is the centromere. The protein localises to the cytoskeleton. The protein resides in the spindle. It is found in the kinetochore. It localises to the midbody. Functionally, multitasking protein that has dual roles in promoting cell proliferation and preventing apoptosis. Component of a chromosome passage protein complex (CPC) which is essential for chromosome alignment and segregation during mitosis and cytokinesis. Acts as an important regulator of the localization of this complex; directs CPC movement to different locations from the inner centromere during prometaphase to midbody during cytokinesis and participates in the organization of the center spindle by associating with polymerized microtubules. Involved in the recruitment of CPC to centromeres during early mitosis via association with histone H3 phosphorylated at 'Thr-3' (H3pT3) during mitosis. The complex with RAN plays a role in mitotic spindle formation by serving as a physical scaffold to help deliver the RAN effector molecule TPX2 to microtubules. May counteract a default induction of apoptosis in G2/M phase. The acetylated form represses STAT3 transactivation of target gene promoters. May play a role in neoplasia. Inhibitor of CASP3 and CASP7. Essential for the maintenance of mitochondrial integrity and function. The sequence is that of Baculoviral IAP repeat-containing protein 5 (BIRC5) from Pongo abelii (Sumatran orangutan).